Here is a 219-residue protein sequence, read N- to C-terminus: Ribosomal RNA large subunit methyltransferase E (219 aa).

Residues Gly-60, Trp-62, Asp-85, Asp-101, and Asp-126 each contribute to the S-adenosyl-L-methionine site. Lys-166 serves as the catalytic Proton acceptor.

It belongs to the class I-like SAM-binding methyltransferase superfamily. RNA methyltransferase RlmE family.

It is found in the cytoplasm. The catalysed reaction is uridine(2552) in 23S rRNA + S-adenosyl-L-methionine = 2'-O-methyluridine(2552) in 23S rRNA + S-adenosyl-L-homocysteine + H(+). Functionally, specifically methylates the uridine in position 2552 of 23S rRNA at the 2'-O position of the ribose in the fully assembled 50S ribosomal subunit. The sequence is that of Ribosomal RNA large subunit methyltransferase E from Bordetella avium (strain 197N).